The sequence spans 177 residues: Large ribosomal subunit protein bL19 (177 aa).

Belongs to the bacterial ribosomal protein bL19 family.

In terms of biological role, this protein is located at the 30S-50S ribosomal subunit interface and may play a role in the structure and function of the aminoacyl-tRNA binding site. The chain is Large ribosomal subunit protein bL19 from Rhizobium meliloti (strain 1021) (Ensifer meliloti).